A 221-amino-acid chain; its full sequence is MGQKVNPHGLRVGVIKGWDAKWYANKKNFADNLIEDNKIRKFVKKELFSAGISKIEIERAAKRVKLNIYTAKPGVIIGKGGSGIEALKNKLTQFVENKNVLINIVEVKSAEADAQLMAENIAAQLEKRISFRRAMKQTMQRAMKHGIKGVKTACSGRLGGAEIARTEHYHEGTIPLQTLRADIDYGFAEADTTYGKIGVKVWVYNGEVLPTKKVEKEEANA.

One can recognise a KH type-2 domain in the interval 39–108 (IRKFVKKELF…NVLINIVEVK (70 aa)).

The protein belongs to the universal ribosomal protein uS3 family. As to quaternary structure, part of the 30S ribosomal subunit. Forms a tight complex with proteins S10 and S14.

Its function is as follows. Binds the lower part of the 30S subunit head. Binds mRNA in the 70S ribosome, positioning it for translation. The sequence is that of Small ribosomal subunit protein uS3 from Clostridium beijerinckii (strain ATCC 51743 / NCIMB 8052) (Clostridium acetobutylicum).